The following is a 118-amino-acid chain: Large ribosomal subunit protein bL19 (118 aa).

Belongs to the bacterial ribosomal protein bL19 family.

In terms of biological role, this protein is located at the 30S-50S ribosomal subunit interface and may play a role in the structure and function of the aminoacyl-tRNA binding site. This is Large ribosomal subunit protein bL19 from Herpetosiphon aurantiacus (strain ATCC 23779 / DSM 785 / 114-95).